Consider the following 492-residue polypeptide: Glutamyl-tRNA(Gln) amidotransferase subunit A (492 aa).

Catalysis depends on charge relay system residues Lys-78 and Ser-158. The active-site Acyl-ester intermediate is the Ser-182.

The protein belongs to the amidase family. GatA subfamily. In terms of assembly, heterotrimer of A, B and C subunits.

The catalysed reaction is L-glutamyl-tRNA(Gln) + L-glutamine + ATP + H2O = L-glutaminyl-tRNA(Gln) + L-glutamate + ADP + phosphate + H(+). Its function is as follows. Allows the formation of correctly charged Gln-tRNA(Gln) through the transamidation of misacylated Glu-tRNA(Gln) in organisms which lack glutaminyl-tRNA synthetase. The reaction takes place in the presence of glutamine and ATP through an activated gamma-phospho-Glu-tRNA(Gln). In Rhodopseudomonas palustris (strain BisA53), this protein is Glutamyl-tRNA(Gln) amidotransferase subunit A.